The chain runs to 586 residues: Alpha-1,2-mannosyltransferase MNN5 (586 aa).

The N-terminal stretch at 1 to 29 (MLIRLKKRKILQVIVSAVVLILFFCSVHN) is a signal peptide. N-linked (GlcNAc...) asparagine glycans are attached at residues asparagine 113, asparagine 136, asparagine 259, and asparagine 264.

It belongs to the MNN1/MNT family. Interacts with SVP26. In terms of processing, glycosylated.

The protein localises to the golgi apparatus. It localises to the cis-Golgi network. Its pathway is protein modification; protein glycosylation. Functionally, responsible for addition of first and second mannose residues to the outer chain of core N-linked polysaccharides and to O-linked mannotriose. Implicated in late Golgi modifications. This chain is Alpha-1,2-mannosyltransferase MNN5 (MNN5), found in Saccharomyces cerevisiae (strain ATCC 204508 / S288c) (Baker's yeast).